The following is a 421-amino-acid chain: Subtilisin-like protease 2 (421 aa).

Residues 1 to 16 (MQLLNFGLLLLPFVAG) form the signal peptide. A propeptide spanning residues 17–122 (DLAPQPEPLL…VHPDQHVYLA (106 aa)) is cleaved from the precursor. The Inhibitor I9 domain maps to 36-122 (QYIVTLKEGL…VHPDQHVYLA (87 aa)). The 291-residue stretch at 131–421 (RWGLGYMSSK…ERKFTLPKYY (291 aa)) folds into the Peptidase S8 domain. Residues D169 and H201 each act as charge relay system in the active site. 3 N-linked (GlcNAc...) asparagine glycosylation sites follow: N248, N261, and N348. The active-site Charge relay system is the S357. Residue N388 is glycosylated (N-linked (GlcNAc...) asparagine).

This sequence belongs to the peptidase S8 family.

It is found in the secreted. Its function is as follows. Secreted subtilisin-like serine protease with keratinolytic activity that contributes to pathogenicity. This is Subtilisin-like protease 2 (SUB2) from Trichophyton verrucosum (strain HKI 0517).